The primary structure comprises 371 residues: Ubiquitin receptor RAD23b (371 aa).

The region spanning 1-79 (MKLTVKTLKG…LVVMLSKSKS (79 aa)) is the Ubiquitin-like domain. A compositionally biased stretch (low complexity) spans 79 to 117 (SGGSAGQASVQTSSVSQPVSATTSSTKPAAPSTTQSSPV). The tract at residues 79–142 (SGGSAGQASV…DTYGQAASTL (64 aa)) is disordered. Residues 128-142 (PAAQTDTYGQAASTL) are compositionally biased toward polar residues. The 44-residue stretch at 146-189 (SSLEQMVQQIMEMGGGSWDKETVTRALRAAYNNPERAVDYLYSG) folds into the UBA 1 domain. The STI1 domain maps to 242–285 (GTLEFLRNNDQFQQLRTMVHSNPQILQPMLQELGKQNPQLLRLI). A UBA 2 domain is found at 325–365 (PAEQEAIQRLEAMGFDRALVIEAFLACDRNEELAANYLLEN).

Belongs to the RAD23 family. In terms of assembly, interacts with 'Lys-48'-linked polyubiquitin chains. Interacts with RPN10 via its ubiquitin-like domain. Interacts with UBQ1, UBQ2, UBQ5, UBQ7, UBQ10, UBQ11 and IAA16. Binds to RAD4. In terms of tissue distribution, widely expressed in the whole plant.

It localises to the nucleus. Its subcellular location is the cytoplasm. Functionally, may be involved in nucleotide excision repair. Binds and presumably selects ubiquitin-conjugates for destruction. Prefers multiubiquitin chains rather than single ubiquitins, with a binding affinity for 'Lys-48'-linked ubiquitin chains. Acts as a ubiquitin receptor that associates with the 26S proteasomal docking subunit RPN10 for the indirect recognition of ubiquitinated substrates of ubiquitin/26S proteasome-mediated proteolysis (UPP). Involved in UV tolerance in both roots and hypocotyls, specifically in dark conditions. This is Ubiquitin receptor RAD23b from Arabidopsis thaliana (Mouse-ear cress).